A 1496-amino-acid chain; its full sequence is Rap guanine nucleotide exchange factor 2 (1496 aa).

2 disordered regions span residues H40–L59 and S68–L101. Residues V83–I94 are compositionally biased toward acidic residues. A nucleoside 3',5'-cyclic phosphate is bound at residue A135–V254. The 114-residue stretch at K267–K380 folds into the N-terminal Ras-GEF domain. A PDZ domain is found at L385–F470. Position 501 is a phosphoserine (S501). The Ras-associating domain maps to P606–E692. T644 carries the phosphothreonine; by PLK2 modification. The Ras-GEF domain occupies S717–L944. The residue at position 806 (S806) is a Phosphoserine; by PLK2. S930 bears the Phosphoserine mark. Phosphoserine; by PLK2 occurs at positions 933 and 1022. A disordered region spans residues P1002–Q1051. A compositionally biased stretch (low complexity) spans P1030 to A1041. S1079, S1088, S1094, S1115, S1119, and S1158 each carry phosphoserine. The interval G1093 to F1159 is disordered. Composition is skewed to low complexity over residues S1110 to P1124 and S1140 to F1159. Position 1175 is a phosphoserine; by PLK2 (S1175). Disordered regions lie at residues S1224–H1256, S1303–K1369, and R1390–V1496. The segment covering E1227–S1237 has biased composition (basic and acidic residues). Composition is skewed to polar residues over residues G1246 to H1256 and Y1306 to G1330. Low complexity predominate over residues P1440–A1455. Residues A1485 to V1496 are compositionally biased toward acidic residues.

This sequence belongs to the RAPGEF2 family. As to quaternary structure, found in a complex, at least composed of KIDINS220, MAGI2, NTRK1 and RAPGEF2; the complex is mainly formed at late endosomes in a neuronal growth factor (NGF)-dependent manner. Interacts (via C-terminal domain) with NEDD4 (via WW domains); this interaction leads to ubiquitination and degradation via the proteasome pathway in a cAMP-independent manner. Interacts with MAGI1 (via PDZ domain). Interacts with ADRB1 (via C-terminal PDZ motif); the interaction is direct. Interacts (via Ras-associating domain) with RAP1A (via GTP-bound active form). Interacts weakly with HRAS (via GDP- and GTP-bound forms). Interacts (via C-terminal domain) with MAGI2 (via PDZ and WW domains). Interacts with CDH1, CTNNB1 and TJP1. Ubiquitinated by NEDD4, leading to proteasomal degradation. Post-translationally, phosphorylation by PLK2 promotes its activity. In terms of tissue distribution, expressed in all layers of the cerebral cortex, hippocampus and cerebellum. Expressed in the cortical plate, cingulate cortex and the subventricular zone. Expressed in neurons and endocrine cells (at protein level). Expressed in melanoma cells.

The protein resides in the cytoplasm. It is found in the perinuclear region. Its subcellular location is the cell membrane. It localises to the late endosome. The protein localises to the cell junction. In terms of biological role, functions as a guanine nucleotide exchange factor (GEF), which activates Rap and Ras family of small GTPases by exchanging bound GDP for free GTP in a cAMP-dependent manner. Serves as a link between cell surface receptors and Rap/Ras GTPases in intracellular signaling cascades. Also acts as an effector for Rap1 by direct association with Rap1-GTP thereby leading to the amplification of Rap1-mediated signaling. Shows weak activity on HRAS. It is controversial whether RAPGEF2 binds cAMP and cGMP or not. Its binding to ligand-activated beta-1 adrenergic receptor ADRB1 leads to the Ras activation through the G(s)-alpha signaling pathway. Involved in the cAMP-induced Ras and Erk1/2 signaling pathway that leads to sustained inhibition of long term melanogenesis by reducing dendrite extension and melanin synthesis. Also provides inhibitory signals for cell proliferation of melanoma cells and promotes their apoptosis in a cAMP-independent nanner. Regulates cAMP-induced neuritogenesis by mediating the Rap1/B-Raf/ERK signaling through a pathway that is independent on both PKA and RAPGEF3/RAPGEF4. Involved in neuron migration and in the formation of the major forebrain fiber connections forming the corpus callosum, the anterior commissure and the hippocampal commissure during brain development. Involved in neuronal growth factor (NGF)-induced sustained activation of Rap1 at late endosomes and in brain-derived neurotrophic factor (BDNF)-induced axon outgrowth of hippocampal neurons. Plays a role in the regulation of embryonic blood vessel formation and in the establishment of basal junction integrity and endothelial barrier function. May be involved in the regulation of the vascular endothelial growth factor receptor KDR and cadherin CDH5 expression at allantois endothelial cell-cell junctions. The chain is Rap guanine nucleotide exchange factor 2 (Rapgef2) from Mus musculus (Mouse).